The primary structure comprises 440 residues: Protein eva-1 homolog C (440 aa).

Residues 1-13 (MLLPGHPRPPPAP) are compositionally biased toward pro residues. The tract at residues 1 to 23 (MLLPGHPRPPPAPQSAQNQGLRR) is disordered. An N-terminal signal peptide occupies residues 1-48 (MLLPGHPRPPPAPQSAQNQGLRRQVEPPGQLLRLFYCTVLVCSKETSA). Residues 49–321 (LTDFSGYLTK…AYIRAHPERA (273 aa)) are Extracellular-facing. N-linked (GlcNAc...) asparagine glycans are attached at residues Asn62, Asn109, and Asn165. An SUEL-type lectin 1 domain is found at 67–159 (ACDGDYLNLQ…KYLLVSFKCQ (93 aa)). Residues 168 to 260 (VCENQELKLH…KYLTVAYACV (93 aa)) form the SUEL-type lectin 2 domain. Residues 322–342 (ALLFMSSVCIGLLLTLCALVI) form a helical membrane-spanning segment. The Cytoplasmic portion of the chain corresponds to 343-440 (RVSCTKDFRE…SLPRNVGHFY (98 aa)). The interval 364 to 384 (SDKAEEDSEEDLEEEDSSDSQ) is disordered. Acidic residues predominate over residues 367–381 (AEEDSEEDLEEEDSS).

This sequence belongs to the EVA1 family. As to expression, ubiquitous.

It localises to the cell membrane. Its function is as follows. Binds heparin. This is Protein eva-1 homolog C (Eva1c) from Mus musculus (Mouse).